Here is a 1372-residue protein sequence, read N- to C-terminus: DNA-directed RNA polymerase subunit beta (1372 aa).

Belongs to the RNA polymerase beta chain family. The RNAP catalytic core consists of 2 alpha, 1 beta, 1 beta' and 1 omega subunit. When a sigma factor is associated with the core the holoenzyme is formed, which can initiate transcription.

It catalyses the reaction RNA(n) + a ribonucleoside 5'-triphosphate = RNA(n+1) + diphosphate. DNA-dependent RNA polymerase catalyzes the transcription of DNA into RNA using the four ribonucleoside triphosphates as substrates. This is DNA-directed RNA polymerase subunit beta from Bradyrhizobium sp. (strain ORS 278).